The chain runs to 1151 residues: Sterol regulatory element-binding protein 1 (1151 aa).

The interval 1–59 is transcriptional activation (acidic); sequence MDEPPFTEAALEQALAEPCELDAALLTDIEDMLQLINNQDSDFPGLFDAPYAGVAGGTD. The Cytoplasmic portion of the chain corresponds to 1 to 487; it reads MDEPPFTEAA…HGRGMLDRSR (487 aa). A 9aaTAD motif is present at residues 27–35; the sequence is TDIEDMLQL. 2 disordered regions span residues 39-125 and 164-184; these read QDSD…IKEE and GYPSPPGSFSSATPPGSTSQT. The segment covering 57 to 69 has biased composition (low complexity); sequence GTDPTSPDASSPG. Residues 91–105 are compositionally biased toward pro residues; it reads TPPPPPVSPTQPAPT. Phosphoserine is present on residues S98 and S117. Over residues 170–184 the composition is skewed to polar residues; the sequence is GSFSSATPPGSTSQT. The interval 234 to 497 is interaction with LMNA; the sequence is QQVPVLLQPH…LALCVLVFLC (264 aa). A bHLH domain is found at 324-374; the sequence is EKRTAHNAIEKRYRSSINDKIIELKDLVVGTEAKLNKSAVLRKAIDYIRFL. Residues S338 and S339 each carry the phosphoserine; by SIK1 modification. The interval 374–396 is leucine-zipper; it reads LQQSNQKLKQENLSLRTAAHKSK. At S397 the chain carries Phosphoserine; by AMPK. Residues 399–479 form a disordered region; that stretch reads KDLVSCSSGG…KPEQLPAPHG (81 aa). Residue S403 is modified to Phosphoserine; by SIK1. A compositionally biased stretch (low complexity) spans 431–448; that stretch reads DAGSPSQSSPLSLGSRGS. At S457 the chain carries Phosphoserine. Residues 488–508 form a helical membrane-spanning segment; the sequence is LALCVLVFLCLSCNPLASLMG. The Lumenal portion of the chain corresponds to 509-547; that stretch reads SWALPGPSDATSAYHGPWRSVLGAEGRDGPGWVLWLLPP. Residues 548–568 form a helical membrane-spanning segment; it reads LVWLTNGLLVLLFLALLFVYG. Residues 569 to 1151 lie on the Cytoplasmic side of the membrane; that stretch reads EPVTRPHSDP…LGGGTTVTSS (583 aa). Residues 987–1006 are disordered; the sequence is RQKPPPPSQASQGSSSGAQA. The segment covering 995-1006 has biased composition (low complexity); that stretch reads QASQGSSSGAQA. Residue S1060 is modified to Phosphoserine.

It belongs to the SREBP family. As to quaternary structure, efficient DNA binding of the soluble transcription factor fragment requires dimerization with another bHLH protein. Interacts with CEBPA, the interaction produces a transcriptional synergy. Interacts with LMNA. In terms of assembly, forms a tight complex with SCAP, the SCAP-SREBP complex, in the endoplasmic reticulum membrane and the Golgi apparatus. Interacts with PAQR3; the interaction anchors the SCAP-SREBP complex to the Golgi apparatus in low cholesterol conditions. Processed in the Golgi apparatus, releasing the protein from the membrane. At low cholesterol the SCAP-SREBP complex is recruited into COPII vesicles for export from the endoplasmic reticulum. In the Golgi, complex SREBPs are cleaved sequentially by site-1 (MBTPS1, S1P) and site-2 (MBTPS2, S2P) proteases. The first cleavage by site-1 protease occurs within the luminal loop, the second cleavage by site-2 protease occurs within the first transmembrane domain, releasing the transcription factor from the Golgi membrane. In terms of processing, phosphorylated by AMPK, leading to suppress protein processing and nuclear translocation, and repress target gene expression. Phosphorylation at Ser-403 by SIK1 represses activity possibly by inhibiting DNA-binding. Post-translationally, SCAP-free SREBF1 is ubiquitinated by the BCR(ARMC5) complex, leading to its degradation. Ubiquitinated; the nuclear form has a rapid turnover and is rapidly ubiquitinated and degraded by the proteasome in the nucleus.

It is found in the endoplasmic reticulum membrane. Its subcellular location is the golgi apparatus membrane. The protein resides in the cytoplasmic vesicle. It localises to the COPII-coated vesicle membrane. The protein localises to the nucleus. Activation by cleavage is down-regulated upon activation of SIRT3-dependent PRKAA1/AMPK-alpha signaling cascade which leads to inhibition of ATP-consuming lipogenesis to restore cellular energy balance. Functionally, precursor of the transcription factor form (Processed sterol regulatory element-binding protein 1), which is embedded in the endoplasmic reticulum membrane. Low sterol concentrations promote processing of this form, releasing the transcription factor form that translocates into the nucleus and activates transcription of genes involved in cholesterol biosynthesis and lipid homeostasis. Key transcription factor that regulates expression of genes involved in cholesterol biosynthesis and lipid homeostasis. Binds to the sterol regulatory element 1 (SRE-1) (5'-ATCACCCCAC-3'). Has dual sequence specificity binding to both an E-box motif (5'-ATCACGTGA-3') and to SRE-1 (5'-ATCACCCCAC-3'). Regulates the promoters of genes involved in cholesterol biosynthesis and the LDL receptor (LDLR) pathway of sterol regulation. This is Sterol regulatory element-binding protein 1 (SREBF1) from Sus scrofa (Pig).